Reading from the N-terminus, the 281-residue chain is Aquaporin-9 (281 aa).

Over 1 to 17 (MGAFVNTKVYIENKNIR) the chain is Cytoplasmic. Residues 18-36 (DWLSEALSMFMYMSLLLGS) form a helical membrane-spanning segment. Residues 37-50 (AATGHFSGREDDAL) are Extracellular-facing. The helical transmembrane segment at 51 to 69 (FGVIFQGFSITFGIYIGGA) threads the bilayer. Residues 70–71 (MS) lie on the Cytoplasmic side of the membrane. An intramembrane region (discontinuously helical) is located at residues 72–84 (GAIINPALTLAVA). The NPA 1 signature appears at 76-78 (NPA). Over 85–90 (LLGKIS) the chain is Cytoplasmic. Residues 91–115 (WRKCIVLQSAQYIGSFIASAVVYLI) traverse the membrane as a helical segment. Residues 116-157 (YNDSLDAFGAGANFTATEPGVFRKDVAGIWSTFPKTYLKERG) lie on the Extracellular side of the membrane. 2 N-linked (GlcNAc...) asparagine glycosylation sites follow: Asn-117 and Asn-128. Residues 158-175 (AIFNQIFCSMLLTFGFLA) form a helical membrane-spanning segment. The Cytoplasmic segment spans residues 176–187 (ISDYKNFRPSKG). A helical transmembrane segment spans residues 188-204 (LFPIAVGLLVMTVFLAF). At 205–207 (SYS) the chain is on the extracellular side. Positions 208–222 (TGAAMNPARDFSPRL) form an intramembrane region, discontinuously helical. Positions 213–215 (NPA) match the NPA 2 motif. Topologically, residues 223–241 (WSLIIGYGIEVFSYNQYEW) are extracellular. Residues 242-262 (FWIPWLMPYVGAMLGALIYQL) traverse the membrane as a helical segment. At 263-281 (LIGAQWSKGQKGESKHKDP) the chain is on the cytoplasmic side.

It belongs to the MIP/aquaporin (TC 1.A.8) family.

The protein resides in the cell membrane. The enzyme catalyses H2O(in) = H2O(out). In terms of biological role, aquaglyceroporin that may modulate the water content and osmolytes during anhydrobiosis. In Milnesium tardigradum (Water bear), this protein is Aquaporin-9.